Consider the following 299-residue polypeptide: Pyridoxal 5'-phosphate synthase subunit PdxS (299 aa).

Aspartate 24 contributes to the D-ribose 5-phosphate binding site. Lysine 81 (schiff-base intermediate with D-ribose 5-phosphate) is an active-site residue. Glycine 153 contacts D-ribose 5-phosphate. Residue arginine 165 participates in D-glyceraldehyde 3-phosphate binding. D-ribose 5-phosphate-binding positions include glycine 219 and 240–241; that span reads GS.

This sequence belongs to the PdxS/SNZ family. In the presence of PdxT, forms a dodecamer of heterodimers.

The catalysed reaction is aldehydo-D-ribose 5-phosphate + D-glyceraldehyde 3-phosphate + L-glutamine = pyridoxal 5'-phosphate + L-glutamate + phosphate + 3 H2O + H(+). It functions in the pathway cofactor biosynthesis; pyridoxal 5'-phosphate biosynthesis. Its function is as follows. Catalyzes the formation of pyridoxal 5'-phosphate from ribose 5-phosphate (RBP), glyceraldehyde 3-phosphate (G3P) and ammonia. The ammonia is provided by the PdxT subunit. Can also use ribulose 5-phosphate and dihydroxyacetone phosphate as substrates, resulting from enzyme-catalyzed isomerization of RBP and G3P, respectively. The sequence is that of Pyridoxal 5'-phosphate synthase subunit PdxS from Methanococcus maripaludis (strain C5 / ATCC BAA-1333).